Consider the following 177-residue polypeptide: Large ribosomal subunit protein uL6 (177 aa).

It belongs to the universal ribosomal protein uL6 family. In terms of assembly, part of the 50S ribosomal subunit.

Functionally, this protein binds to the 23S rRNA, and is important in its secondary structure. It is located near the subunit interface in the base of the L7/L12 stalk, and near the tRNA binding site of the peptidyltransferase center. This chain is Large ribosomal subunit protein uL6, found in Alteromonas mediterranea (strain DSM 17117 / CIP 110805 / LMG 28347 / Deep ecotype).